The chain runs to 392 residues: Formate-dependent phosphoribosylglycinamide formyltransferase (392 aa).

N(1)-(5-phospho-beta-D-ribosyl)glycinamide contacts are provided by residues 22–23 (EL) and Glu-82. Residues Arg-114, Lys-155, 160–165 (SSGKGQ), 195–198 (EGVV), and Glu-203 each bind ATP. The region spanning 119–308 (RLAAEELWVP…EFALHVRAFL (190 aa)) is the ATP-grasp domain. Mg(2+) is bound by residues Glu-267 and Glu-279. Residues Asp-286, Lys-355, and 362–363 (RR) contribute to the N(1)-(5-phospho-beta-D-ribosyl)glycinamide site.

It belongs to the PurK/PurT family. Homodimer.

It catalyses the reaction N(1)-(5-phospho-beta-D-ribosyl)glycinamide + formate + ATP = N(2)-formyl-N(1)-(5-phospho-beta-D-ribosyl)glycinamide + ADP + phosphate + H(+). Its pathway is purine metabolism; IMP biosynthesis via de novo pathway; N(2)-formyl-N(1)-(5-phospho-D-ribosyl)glycinamide from N(1)-(5-phospho-D-ribosyl)glycinamide (formate route): step 1/1. Involved in the de novo purine biosynthesis. Catalyzes the transfer of formate to 5-phospho-ribosyl-glycinamide (GAR), producing 5-phospho-ribosyl-N-formylglycinamide (FGAR). Formate is provided by PurU via hydrolysis of 10-formyl-tetrahydrofolate. This Erwinia tasmaniensis (strain DSM 17950 / CFBP 7177 / CIP 109463 / NCPPB 4357 / Et1/99) protein is Formate-dependent phosphoribosylglycinamide formyltransferase.